Reading from the N-terminus, the 964-residue chain is Isoleucine--tRNA ligase (964 aa).

Positions Pro66 to His76 match the 'HIGH' region motif. Residue Glu596 coordinates L-isoleucyl-5'-AMP. Residues Lys637 to Ser641 carry the 'KMSKS' region motif. Position 640 (Lys640) interacts with ATP. The Zn(2+) site is built by Cys927, Cys930, Cys947, and Cys950.

Belongs to the class-I aminoacyl-tRNA synthetase family. IleS type 1 subfamily. Monomer. Zn(2+) serves as cofactor.

The protein localises to the cytoplasm. It catalyses the reaction tRNA(Ile) + L-isoleucine + ATP = L-isoleucyl-tRNA(Ile) + AMP + diphosphate. Functionally, catalyzes the attachment of isoleucine to tRNA(Ile). As IleRS can inadvertently accommodate and process structurally similar amino acids such as valine, to avoid such errors it has two additional distinct tRNA(Ile)-dependent editing activities. One activity is designated as 'pretransfer' editing and involves the hydrolysis of activated Val-AMP. The other activity is designated 'posttransfer' editing and involves deacylation of mischarged Val-tRNA(Ile). The protein is Isoleucine--tRNA ligase of Cupriavidus necator (strain ATCC 17699 / DSM 428 / KCTC 22496 / NCIMB 10442 / H16 / Stanier 337) (Ralstonia eutropha).